We begin with the raw amino-acid sequence, 56 residues long: PI-stichotoxin-Hcr2p (56 aa).

The BPTI/Kunitz inhibitor domain occupies 4–54 (CLEPKVVGPCTAYFRRFYYDSETGKCTPFIHGGCEGNGNNFETLRACRAIC). Disulfide bonds link Cys-4/Cys-54, Cys-13/Cys-37, and Cys-29/Cys-50.

It belongs to the venom Kunitz-type family. Sea anemone type 2 potassium channel toxin subfamily.

The protein localises to the secreted. It is found in the nematocyst. Its function is as follows. This recombinant serine protease inhibitor inhibits trypsin (Ki=100 nM). It may also inhibit the TRPV1 receptor of the pain pathway. It possesses anti-inflammatory activity in vitro. It blocks histamine influence on intracellular calcium concentration in murine bone marrow-derived macrophages (84% inhibition at 10 uM and 67.2% at 1 uM), which can indicate inhibition of H1-histamine receptor (HRH1). In vitro, it shows cytoprotective activity in the oxidative stress agent 6-hydroxydopamine (6-OHDA)-induced neurotoxicity model. In this model, it decreases reactive oxygen species (ROS) level, and increases cell viability in a correlated manner. In vivo, it shows analgesic activity, since it increases hot plate and tail flick withdrawal latencies, when using a mice thermal pain stimulation model. This chain is PI-stichotoxin-Hcr2p, found in Radianthus crispa (Leathery sea anemone).